We begin with the raw amino-acid sequence, 309 residues long: Ribonuclease Z (309 aa).

Zn(2+) contacts are provided by H63, H65, D67, H68, H145, D216, and H274. D67 acts as the Proton acceptor in catalysis.

Belongs to the RNase Z family. Homodimer. Requires Zn(2+) as cofactor.

The enzyme catalyses Endonucleolytic cleavage of RNA, removing extra 3' nucleotides from tRNA precursor, generating 3' termini of tRNAs. A 3'-hydroxy group is left at the tRNA terminus and a 5'-phosphoryl group is left at the trailer molecule.. Its function is as follows. Zinc phosphodiesterase, which displays some tRNA 3'-processing endonuclease activity. Probably involved in tRNA maturation, by removing a 3'-trailer from precursor tRNA. In Streptococcus equi subsp. zooepidemicus (strain H70), this protein is Ribonuclease Z.